An 823-amino-acid chain; its full sequence is MSIVQKQEEMNGCGLNVDKVEAFTVSPQEKGRKNKRKLADPSQPNASSLTEFPPYELPSLKPQNHLSGNGSVGEVSNQLQVEVSESVEWDDPFACHLEELLSSNLLTLFLDTMKQLIDLGYTDDEVLKAVSRCRLYCGGNNLLSNIVNNTLSALKTGDEGAGSGDYVFEDLQQLVSYTLVEMISLIKEVRPSLSTVEAMWRLLMCDLNVLQAFEAEGDGLVSSSKLSDSESLGAESNPPKSSDPDNPKPPQSDPQSNRNEPLKFGNFPNTPNSKKTQSSGTTPGKEVCSGSTVSCQGMRSTSFTLVSDEKLVSCRKGRTKKEIAMLRQKSCVEKIRTYSKGSGYKAAKFASVGSFLLEKRVKSSSEFVPRNSSSKITAEIGVKVSLAEDSGCFVRKNSKLDSPVVVVDAKGYITALPARSVKSASKKKTGSESVTLIPSASEKKSDSSIPSTSEKKSGSESEEKASVSAKLAPDYYAGIPYDAALGIYVPRDKKDELILKLVPRVNDLQNELQVWTDWANQKVKEATGRLLKDQPELKALRKEREEAEQYKKEKQLLEENTRKRLSEMDFALKNATSQLEKAFNTAHRLELEQSILKKEMEAAKIKAVESAESFREAKERGERSLKDIHSWEGQKIMLQEELKGQREKVTVLQKEVTKAKNRQNQIEAALKQERTAKGKLSAQASLIRKETKELEALGKVEEERIKGKAETDVKYYIDNIKRLEREISELKLKSDYSRIIALKKGSSESKATKRESLGMPKVKRERECVMCLSEEMSVIFLPCAHQVLCFKCNQLHEKEGMMDCPSCRGTIHRRIQARFARSG.

3 disordered regions span residues 24–72 (TVSP…NGSV), 224–291 (SKLS…CSGS), and 432–464 (ESVT…SEEK). Positions 61–72 (KPQNHLSGNGSV) are enriched in polar residues. Low complexity predominate over residues 224-240 (SKLSDSESLGAESNPPK). The segment covering 267–282 (FPNTPNSKKTQSSGTT) has biased composition (polar residues). A compositionally biased stretch (basic and acidic residues) spans 453–464 (SEKKSGSESEEK). Positions 536-738 (ELKALRKERE…ELKLKSDYSR (203 aa)) form a coiled coil. The RING-type zinc finger occupies 768-808 (CVMCLSEEMSVIFLPCAHQVLCFKCNQLHEKEGMMDCPSCR).

It belongs to the RING-type zinc finger family.

The enzyme catalyses S-ubiquitinyl-[E2 ubiquitin-conjugating enzyme]-L-cysteine + [acceptor protein]-L-lysine = [E2 ubiquitin-conjugating enzyme]-L-cysteine + N(6)-ubiquitinyl-[acceptor protein]-L-lysine.. It participates in protein modification; protein ubiquitination. This is Putative E3 ubiquitin-protein ligase RF4 (RF4) from Arabidopsis thaliana (Mouse-ear cress).